A 152-amino-acid polypeptide reads, in one-letter code: Protein PLANT CADMIUM RESISTANCE 2 (152 aa).

A helical membrane pass occupies residues 57–79 (TAGALYALIAVVTGCACIYSCFY).

This sequence belongs to the cornifelin family. As to quaternary structure, homooligomer. In terms of tissue distribution, expressed in roots, leaves, shoots, stems, flowers and siliques. In leaves, restricted mainly to the vascular tissue. Expressed in all cells in the root tip, in the vascular tissue and the epidermis in the elongation zone, and only in the epidermal cells in the root hair zone.

It localises to the cell membrane. Functionally, zinc transporter acting in both zinc extrusion and long-distance zinc transport. Involved in the loading of zinc into the xyleme and in the detoxification of excess zinc at the epidermal cells. Acts independently from the zinc transporters HMA2 and HMA4. May be also involved in cadmium resistance. In Arabidopsis thaliana (Mouse-ear cress), this protein is Protein PLANT CADMIUM RESISTANCE 2 (PCR2).